Consider the following 129-residue polypeptide: Histone H2B.1 (129 aa).

Residues 1-19 (MAPKAEKKPASKAPAEKKP) are compositionally biased toward basic and acidic residues. The tract at residues 1–37 (MAPKAEKKPASKAPAEKKPAAKKTASTDSKKRTKTRK) is disordered. 2 positions are modified to N6-acetyllysine; alternate: K7 and K8. Glycyl lysine isopeptide (Lys-Gly) (interchain with G-Cter in SUMO); alternate cross-links involve residues K7 and K8. A Phosphoserine modification is found at S11. K12 is modified (N6-acetyllysine). The residue at position 17 (K17) is an N6-acetyllysine; alternate. A Glycyl lysine isopeptide (Lys-Gly) (interchain with G-Cter in SUMO); alternate cross-link involves residue K17. K18 participates in a covalent cross-link: Glycyl lysine isopeptide (Lys-Gly) (interchain with G-Cter in SUMO). K123 is covalently cross-linked (Glycyl lysine isopeptide (Lys-Gly) (interchain with G-Cter in ubiquitin)).

The protein belongs to the histone H2B family. The nucleosome is a histone octamer containing two molecules each of H2A, H2B, H3 and H4 assembled in one H3-H4 heterotetramer and two H2A-H2B heterodimers. The octamer wraps approximately 147 bp of DNA. In terms of processing, monoubiquitinated by the UBC2-BRE1 complex to form H2BK123ub1. H2BK123ub1 gives a specific tag for epigenetic transcriptional activation and is also prerequisite for H3K4me and H3K79me formation. H2BK123ub1 also modulates the formation of double-strand breaks during meiosis and is a prerequisite for DNA-damage checkpoint activation. Phosphorylated by STE20 to form H2BS10ph during progression through meiotic prophase. May be correlated with chromosome condensation. Post-translationally, acetylated by GCN5 to form H2BK11ac and H2BK16ac. H2BK16ac can also be formed by ESA1. Acetylation of N-terminal lysines and particularly formation of H2BK11acK16ac has a positive effect on transcription. In terms of processing, sumoylation to form H2BK6su or H2BK7su, and probably also H2BK16su or H2BK17su, occurs preferentially near the telomeres and represses gene transcription.

Its subcellular location is the nucleus. The protein resides in the chromosome. In terms of biological role, core component of nucleosome. Nucleosomes wrap and compact DNA into chromatin, limiting DNA accessibility to the cellular machineries which require DNA as a template. Histones thereby play a central role in transcription regulation, DNA repair, DNA replication and chromosomal stability. DNA accessibility is regulated via a complex set of post-translational modifications of histones, also called histone code, and nucleosome remodeling. This chain is Histone H2B.1 (HTB1), found in Meyerozyma guilliermondii (strain ATCC 6260 / CBS 566 / DSM 6381 / JCM 1539 / NBRC 10279 / NRRL Y-324) (Yeast).